The following is a 367-amino-acid chain: Peptide chain release factor 2 (367 aa).

Position 254 is an N5-methylglutamine (glutamine 254).

It belongs to the prokaryotic/mitochondrial release factor family. In terms of processing, methylated by PrmC. Methylation increases the termination efficiency of RF2.

It is found in the cytoplasm. Peptide chain release factor 2 directs the termination of translation in response to the peptide chain termination codons UGA and UAA. In Janthinobacterium sp. (strain Marseille) (Minibacterium massiliensis), this protein is Peptide chain release factor 2.